Here is a 286-residue protein sequence, read N- to C-terminus: Thymidylate synthase (286 aa).

140-141 (RR) lines the dUMP pocket. Cys161 acts as the Nucleophile in catalysis. DUMP is bound by residues 185–188 (RSND), Asn196, and 226–228 (HIY). Residue Asp188 participates in (6R)-5,10-methylene-5,6,7,8-tetrahydrofolate binding. Ala285 provides a ligand contact to (6R)-5,10-methylene-5,6,7,8-tetrahydrofolate.

Belongs to the thymidylate synthase family. Bacterial-type ThyA subfamily. In terms of assembly, homodimer.

The protein localises to the cytoplasm. It carries out the reaction dUMP + (6R)-5,10-methylene-5,6,7,8-tetrahydrofolate = 7,8-dihydrofolate + dTMP. Its pathway is pyrimidine metabolism; dTTP biosynthesis. Functionally, catalyzes the reductive methylation of 2'-deoxyuridine-5'-monophosphate (dUMP) to 2'-deoxythymidine-5'-monophosphate (dTMP) while utilizing 5,10-methylenetetrahydrofolate (mTHF) as the methyl donor and reductant in the reaction, yielding dihydrofolate (DHF) as a by-product. This enzymatic reaction provides an intracellular de novo source of dTMP, an essential precursor for DNA biosynthesis. This chain is Thymidylate synthase, found in Streptococcus thermophilus (strain ATCC BAA-250 / LMG 18311).